Here is a 435-residue protein sequence, read N- to C-terminus: Serine carboxypeptidase-like 12 (435 aa).

Residues M1–S21 form the signal peptide. Disulfide bonds link C80/C323, C244/C258, and C282/C289. The N-linked (GlcNAc...) asparagine glycan is linked to N101. S176 is a catalytic residue. 3 N-linked (GlcNAc...) asparagine glycosylation sites follow: N313, N336, and N344. The active site involves D360. A glycan (N-linked (GlcNAc...) asparagine) is linked at N376. Residue H413 is part of the active site. N420 carries an N-linked (GlcNAc...) asparagine glycan.

Belongs to the peptidase S10 family. In terms of tissue distribution, expressed in roots.

The protein localises to the secreted. Functionally, probable carboxypeptidase. This chain is Serine carboxypeptidase-like 12 (SCPL12), found in Arabidopsis thaliana (Mouse-ear cress).